Here is a 368-residue protein sequence, read N- to C-terminus: Guanylate binding protein 128up (368 aa).

At Lys22 the chain carries (3S)-3-hydroxylysine. Positions 65–290 constitute an OBG-type G domain; that stretch reads ARVGFVGFPS…LLELMWEYLR (226 aa). GTP-binding positions include 71 to 78, 117 to 121, and 248 to 251; these read GFPSVGKS, DLPGI, and NKID. Residues 290 to 366 enclose the TGS domain; that stretch reads RLQRIYTKPK…NDEDVVQIVK (77 aa).

Belongs to the TRAFAC class OBG-HflX-like GTPase superfamily. OBG GTPase family. Hydroxylated (with S stereochemistry) at C-3 of Lys-22 by JMJD7. As to expression, expressed in posterior-lateral epidermis of the maxillary lobe.

Its function is as follows. Catalyzes the conversion of GTP to GDP through hydrolysis of the gamma-phosphate bond in GTP. Dfd/deformed is required to activate 128up in maxillary segment cells. This Drosophila melanogaster (Fruit fly) protein is Guanylate binding protein 128up.